A 130-amino-acid chain; its full sequence is D-ribose pyranase (130 aa).

Residue His-20 is the Proton donor of the active site. Substrate contacts are provided by residues Asp-28, His-97, and 119–121 (YAN).

Belongs to the RbsD / FucU family. RbsD subfamily. Homodecamer.

It is found in the cytoplasm. The catalysed reaction is beta-D-ribopyranose = beta-D-ribofuranose. The protein operates within carbohydrate metabolism; D-ribose degradation; D-ribose 5-phosphate from beta-D-ribopyranose: step 1/2. In terms of biological role, catalyzes the interconversion of beta-pyran and beta-furan forms of D-ribose. The protein is D-ribose pyranase of Thermoanaerobacter pseudethanolicus (strain ATCC 33223 / 39E) (Clostridium thermohydrosulfuricum).